The chain runs to 382 residues: Dual-specificity RNA methyltransferase RlmN (382 aa).

Catalysis depends on Glu-95, which acts as the Proton acceptor. In terms of domain architecture, Radical SAM core spans 101-347 (EDDRGTLCIS…TTVRKTRGDD (247 aa)). Cys-108 and Cys-352 form a disulfide bridge. Residues Cys-115, Cys-119, and Cys-122 each coordinate [4Fe-4S] cluster. S-adenosyl-L-methionine-binding positions include 178–179 (GE), Ser-210, 232–234 (SLH), and Asn-309. The active-site S-methylcysteine intermediate is the Cys-352.

The protein belongs to the radical SAM superfamily. RlmN family. Requires [4Fe-4S] cluster as cofactor.

It localises to the cytoplasm. It catalyses the reaction adenosine(2503) in 23S rRNA + 2 reduced [2Fe-2S]-[ferredoxin] + 2 S-adenosyl-L-methionine = 2-methyladenosine(2503) in 23S rRNA + 5'-deoxyadenosine + L-methionine + 2 oxidized [2Fe-2S]-[ferredoxin] + S-adenosyl-L-homocysteine. It carries out the reaction adenosine(37) in tRNA + 2 reduced [2Fe-2S]-[ferredoxin] + 2 S-adenosyl-L-methionine = 2-methyladenosine(37) in tRNA + 5'-deoxyadenosine + L-methionine + 2 oxidized [2Fe-2S]-[ferredoxin] + S-adenosyl-L-homocysteine. Its function is as follows. Specifically methylates position 2 of adenine 2503 in 23S rRNA and position 2 of adenine 37 in tRNAs. m2A2503 modification seems to play a crucial role in the proofreading step occurring at the peptidyl transferase center and thus would serve to optimize ribosomal fidelity. The chain is Dual-specificity RNA methyltransferase RlmN from Bordetella avium (strain 197N).